The following is a 387-amino-acid chain: 3-ketoacyl-CoA thiolase (387 aa).

Cysteine 91 acts as the Acyl-thioester intermediate in catalysis. Active-site proton acceptor residues include histidine 343 and cysteine 373.

Belongs to the thiolase-like superfamily. Thiolase family. Heterotetramer of two alpha chains (FadB) and two beta chains (FadA).

It localises to the cytoplasm. It carries out the reaction an acyl-CoA + acetyl-CoA = a 3-oxoacyl-CoA + CoA. It functions in the pathway lipid metabolism; fatty acid beta-oxidation. Catalyzes the final step of fatty acid oxidation in which acetyl-CoA is released and the CoA ester of a fatty acid two carbons shorter is formed. The polypeptide is 3-ketoacyl-CoA thiolase (Photobacterium profundum (strain SS9)).